The sequence spans 397 residues: Ribosomal RNA large subunit methyltransferase I (397 aa).

Residues 2-80 (SAAIYLVKGR…QDINRAFFVK (79 aa)) form the PUA domain.

This sequence belongs to the methyltransferase superfamily. RlmI family.

It localises to the cytoplasm. It carries out the reaction cytidine(1962) in 23S rRNA + S-adenosyl-L-methionine = 5-methylcytidine(1962) in 23S rRNA + S-adenosyl-L-homocysteine + H(+). Specifically methylates the cytosine at position 1962 (m5C1962) of 23S rRNA. The sequence is that of Ribosomal RNA large subunit methyltransferase I from Vibrio vulnificus (strain CMCP6).